The sequence spans 152 residues: Vasotocin-neurophysin VT 1 (152 aa).

Residues 1–19 (MSDSFLPTCILCLLALSSA) form the signal peptide. Cys-20 and Cys-25 form a disulfide bridge. A Glycine amide modification is found at Gly-28. 7 disulfides stabilise this stretch: Cys-40–Cys-84, Cys-43–Cys-57, Cys-51–Cys-74, Cys-58–Cys-64, Cys-91–Cys-103, Cys-97–Cys-115, and Cys-104–Cys-109.

The protein belongs to the vasopressin/oxytocin family.

Its subcellular location is the secreted. Vasotocin is an antidiuretic hormone. The chain is Vasotocin-neurophysin VT 1 from Catostomus commersonii (White sucker).